An 88-amino-acid chain; its full sequence is Protein MATERNALLY EXPRESSED GENE 2 (88 aa).

The first 27 residues, 1 to 27 (MEYRKRVDALVFFSLLLLGYFAAHAHG), serve as a signal peptide directing secretion. A disulfide bridge connects residues Cys65 and Cys87.

Belongs to the MEG family. As to expression, expressed exclusively in endosperm.

The sequence is that of Protein MATERNALLY EXPRESSED GENE 2 (MEG2) from Zea mays (Maize).